A 412-amino-acid chain; its full sequence is Inositol polyphosphate-5-phosphatase A (412 aa).

The S-farnesyl cysteine moiety is linked to residue C409. Residues 410–412 constitute a propeptide, removed in mature form; sequence VVQ.

It belongs to the inositol 1,4,5-trisphosphate 5-phosphatase type I family. As to quaternary structure, interacts with TASOR. In terms of processing, isoprenylation at Cys-409 is required for localization at the membrane.

The protein resides in the cell membrane. It localises to the cell projection. It is found in the dendrite. It catalyses the reaction 1D-myo-inositol 1,4,5-trisphosphate + H2O = 1D-myo-inositol 1,4-bisphosphate + phosphate. The enzyme catalyses 1D-myo-inositol 1,3,4,5-tetrakisphosphate + H2O = 1D-myo-inositol 1,3,4-trisphosphate + phosphate. With respect to regulation, inhibited by EDTA and 2,3-bisphosphoglycerate. Its function is as follows. Phosphatase that specifically hydrolyzes the 5-phosphate of inositol 1,4,5-trisphosphate to inositol 1,4-bisphosphate, and inositol 1,3,4,5-tetrasphosphate to inositol 1,3,4-trisphosphate. Plays a crucial role in the survival of cerebellar Purkinje cells. This chain is Inositol polyphosphate-5-phosphatase A (INPP5A), found in Canis lupus familiaris (Dog).